The sequence spans 388 residues: 8-amino-7-oxononanoate synthase (388 aa).

R23 lines the substrate pocket. Pyridoxal 5'-phosphate is bound at residue 110-111; it reads GF. A substrate-binding site is contributed by H135. Pyridoxal 5'-phosphate is bound by residues S181, H209, and T235. K238 carries the N6-(pyridoxal phosphate)lysine modification. T352 serves as a coordination point for substrate.

It belongs to the class-II pyridoxal-phosphate-dependent aminotransferase family. BioF subfamily. In terms of assembly, homodimer. The cofactor is pyridoxal 5'-phosphate.

The enzyme catalyses 6-carboxyhexanoyl-[ACP] + L-alanine + H(+) = (8S)-8-amino-7-oxononanoate + holo-[ACP] + CO2. The protein operates within cofactor biosynthesis; biotin biosynthesis. Catalyzes the decarboxylative condensation of pimeloyl-[acyl-carrier protein] and L-alanine to produce 8-amino-7-oxononanoate (AON), [acyl-carrier protein], and carbon dioxide. The chain is 8-amino-7-oxononanoate synthase from Sodalis glossinidius (strain morsitans).